Here is a 274-residue protein sequence, read N- to C-terminus: Cytochrome b-c1 complex subunit Rieske, mitochondrial (274 aa).

At 79-103 (SHTDIKVPDFSEYRRLEVLDSTKSS) the chain is on the mitochondrial matrix side. The helical transmembrane segment at 104–140 (RESSEARKGFSYLVTGVTTVGVAYAAKNAVTQFVSSM) threads the bilayer. Topologically, residues 141 to 274 (SASADVLALA…FTSDDMVIVG (134 aa)) are mitochondrial intermembrane. The region spanning 187–272 (EAAVELSQLR…YEFTSDDMVI (86 aa)) is the Rieske domain. Positions 217, 219, 236, 239, and 241 each coordinate [2Fe-2S] cluster. The cysteines at positions 222 and 238 are disulfide-linked.

Belongs to the Rieske iron-sulfur protein family. As to quaternary structure, component of the ubiquinol-cytochrome c oxidoreductase (cytochrome b-c1 complex, complex III, CIII), a multisubunit enzyme composed of 11 subunits. The complex is composed of 3 respiratory subunits cytochrome b, cytochrome c1 and Rieske protein UQCRFS1, 2 core protein subunits UQCRC1/QCR1 and UQCRC2/QCR2, and 6 low-molecular weight protein subunits UQCRH/QCR6, UQCRB/QCR7, UQCRQ/QCR8, UQCR10/QCR9, UQCR11/QCR10 and subunit 9, the cleavage product of Rieske protein UQCRFS1. The complex exists as an obligatory dimer and forms supercomplexes (SCs) in the inner mitochondrial membrane with NADH-ubiquinone oxidoreductase (complex I, CI) and cytochrome c oxidase (complex IV, CIV), resulting in different assemblies (supercomplex SCI(1)III(2)IV(1) and megacomplex MCI(2)III(2)IV(2)). Incorporation of the Rieske protein UQCRFS1 is the penultimate step in complex III assembly. Interacts with TTC19, which is involved in the clearance of UQCRFS1 fragments. In terms of assembly, component of the ubiquinol-cytochrome c oxidoreductase (cytochrome b-c1 complex, complex III, CIII). Subunit 9 corresponds to the mitochondrial targeting sequence (MTS) of Rieske protein UQCRFS1. It is retained after processing and incorporated inside complex III, where it remains bound to the complex and localizes between the 2 core subunits UQCRC1/QCR1 and UQCRC2/QCR2. [2Fe-2S] cluster serves as cofactor. In terms of processing, proteolytic processing is necessary for the correct insertion of UQCRFS1 in the complex III dimer. Several fragments are generated during UQCRFS1 insertion, most probably due to the endogenous matrix-processing peptidase (MPP) activity of the 2 core protein subunits UQCRC1/QCR1 and UQCRC2/QCR2, which are homologous to the 2 mitochondrial-processing peptidase (MPP) subunits beta-MPP and alpha-MPP respectively. The action of the protease is also necessary for the clearance of the UQCRFS1 fragments.

The protein localises to the mitochondrion inner membrane. The enzyme catalyses a quinol + 2 Fe(III)-[cytochrome c](out) = a quinone + 2 Fe(II)-[cytochrome c](out) + 2 H(+)(out). Its function is as follows. Component of the ubiquinol-cytochrome c oxidoreductase, a multisubunit transmembrane complex that is part of the mitochondrial electron transport chain which drives oxidative phosphorylation. The respiratory chain contains 3 multisubunit complexes succinate dehydrogenase (complex II, CII), ubiquinol-cytochrome c oxidoreductase (cytochrome b-c1 complex, complex III, CIII) and cytochrome c oxidase (complex IV, CIV), that cooperate to transfer electrons derived from NADH and succinate to molecular oxygen, creating an electrochemical gradient over the inner membrane that drives transmembrane transport and the ATP synthase. The cytochrome b-c1 complex catalyzes electron transfer from ubiquinol to cytochrome c, linking this redox reaction to translocation of protons across the mitochondrial inner membrane, with protons being carried across the membrane as hydrogens on the quinol. In the process called Q cycle, 2 protons are consumed from the matrix, 4 protons are released into the intermembrane space and 2 electrons are passed to cytochrome c. The Rieske protein is a catalytic core subunit containing a [2Fe-2S] iron-sulfur cluster. It cycles between 2 conformational states during catalysis to transfer electrons from the quinol bound in the Q(0) site in cytochrome b to cytochrome c1. Incorporation of UQCRFS1 is the penultimate step in complex III assembly. Functionally, component of the ubiquinol-cytochrome c oxidoreductase (cytochrome b-c1 complex, complex III, CIII). UQCRFS1 undergoes proteolytic processing once it is incorporated in the complex III dimer. One of the fragments, called subunit 9, corresponds to its mitochondrial targeting sequence (MTS). The proteolytic processing is necessary for the correct insertion of UQCRFS1 in the complex III dimer, but the persistence of UQCRFS1-derived fragments may prevent newly imported UQCRFS1 to be processed and assembled into complex III and is detrimental for the complex III structure and function. This chain is Cytochrome b-c1 complex subunit Rieske, mitochondrial (UQCRFS1), found in Gorilla gorilla gorilla (Western lowland gorilla).